The following is an 878-amino-acid chain: E3 ubiquitin-protein ligase BRE1-like 1 (878 aa).

Residues 1-21 (MASTGEPDRKRRHFSSISPSE) form a disordered region. 4 coiled-coil regions span residues 48-76 (QNLKLSQKLEAQQVECSILEDKLSQIKEK), 200-261 (QLAL…ELQQ), 293-382 (SDRE…EKLQ), and 537-624 (LDMY…ILKS). The RING-type zinc-finger motif lies at 826–865 (CKACNDRPKEVVITKCYHLFCNPCVQKLTGTRQKKCPTCS).

The protein belongs to the BRE1 family. As to quaternary structure, may act as a tetramer consisting of two copies of HUB1 and two copies of HUB2. Interacts with MED21. Ubiquitously expressed.

The protein localises to the nucleus. The enzyme catalyses S-ubiquitinyl-[E2 ubiquitin-conjugating enzyme]-L-cysteine + [acceptor protein]-L-lysine = [E2 ubiquitin-conjugating enzyme]-L-cysteine + N(6)-ubiquitinyl-[acceptor protein]-L-lysine.. It functions in the pathway protein modification; protein ubiquitination. Its function is as follows. E3 ubiquitin-protein ligase that monoubiquitinates H2B to form H2BK143ub1. H2BK143ub1 gives a specific tag for epigenetic transcriptional activation and is also prerequisite for H3K4me and maybe H3K79me. It thereby plays a central role in histone code and gene regulation. Forms a ubiquitin ligase complex in cooperation with the E2 enzyme UBC2/RAD6. Required for the regulation of flowering time and defense against necrotrophic fungal pathogens. Involved in the control of seed dormancy and germination. The protein is E3 ubiquitin-protein ligase BRE1-like 1 (HUB1) of Arabidopsis thaliana (Mouse-ear cress).